Here is a 105-residue protein sequence, read N- to C-terminus: UPF0145 protein OEOE_0637 (105 aa).

This sequence belongs to the UPF0145 family.

The polypeptide is UPF0145 protein OEOE_0637 (Oenococcus oeni (strain ATCC BAA-331 / PSU-1)).